The primary structure comprises 360 residues: Amine dehydrogenase (360 aa).

It belongs to the amine dehydrogenase family. Homodimer.

The enzyme catalyses a secondary alkyl amine + NAD(+) + H2O = a ketone + NH4(+) + NADH + H(+). It catalyses the reaction a secondary alkyl amine + NADP(+) + H2O = a ketone + NH4(+) + NADPH + H(+). It carries out the reaction serinol + NAD(+) + H2O = dihydroxyacetone + NH4(+) + NADH + H(+). The catalysed reaction is serinol + NADP(+) + H2O = dihydroxyacetone + NH4(+) + NADPH + H(+). The enzyme catalyses 2-aminopropan-1-ol + NAD(+) + H2O = hydroxyacetone + NH4(+) + NADH + H(+). It catalyses the reaction (R)-1-phenylethylamine + NAD(+) + H2O = acetophenone + NH4(+) + NADH + H(+). It carries out the reaction (S)-1-phenylethylamine + NAD(+) + H2O = acetophenone + NH4(+) + NADH + H(+). The catalysed reaction is (2S)-2-aminobutan-1-ol + NAD(+) + H2O = 1-hydroxy-2-butanone + NH4(+) + NADH + H(+). The enzyme catalyses (2S)-2-amino-3-methylbutan-1-ol + NAD(+) + H2O = 1-hydroxy-3-methylbutan-2-one + NH4(+) + NADH + H(+). It catalyses the reaction 2-aminopentan-1-ol + NAD(+) + H2O = 1-hydroxypentan-2-one + NH4(+) + NADH + H(+). It carries out the reaction (S)-leucinol + NAD(+) + H2O = 1-hydroxy-4-methylpentan-2-one + NH4(+) + NADH + H(+). The catalysed reaction is (S)-isoleucinol + NAD(+) + H2O = (3S)-1-hydroxy-3-methylpentan-2-one + NH4(+) + NADH + H(+). The enzyme catalyses (S)-methioninol + NAD(+) + H2O = 1-hydroxy-4-(methythio)butan-2-one + NH4(+) + NADH + H(+). It catalyses the reaction 2-aminocyclohexanol + NAD(+) + H2O = 2-hydroxycyclohexan-1-one + NH4(+) + NADH + H(+). It carries out the reaction L-alanine + NAD(+) + H2O = pyruvate + NH4(+) + NADH + H(+). The catalysed reaction is D-alanine + NAD(+) + H2O = pyruvate + NH4(+) + NADH + H(+). The enzyme catalyses L-aspartate + NAD(+) + H2O = oxaloacetate + NH4(+) + NADH + H(+). It catalyses the reaction D-aspartate + NAD(+) + H2O = oxaloacetate + NH4(+) + NADH + H(+). It carries out the reaction L-glutamate + NAD(+) + H2O = 2-oxoglutarate + NH4(+) + NADH + H(+). The catalysed reaction is D-glutamate + NAD(+) + H2O = 2-oxoglutarate + NH4(+) + NADH + H(+). The enzyme catalyses L-serine + NAD(+) + H2O = 3-hydroxypyruvate + NH4(+) + NADH + H(+). It catalyses the reaction D-serine + NAD(+) + H2O = 3-hydroxypyruvate + NH4(+) + NADH + H(+). It carries out the reaction methylamine + NAD(+) + H2O = formaldehyde + NH4(+) + NADH + H(+). The catalysed reaction is ethylamine + NAD(+) + H2O = acetaldehyde + NH4(+) + NADH + H(+). The enzyme catalyses propylamine + NAD(+) + H2O = propanal + NH4(+) + NADH + H(+). It catalyses the reaction butylamine + NAD(+) + H2O = butanal + NH4(+) + NADH + H(+). It carries out the reaction hexylamine + NAD(+) + H2O = hexanal + NH4(+) + NADH + H(+). The catalysed reaction is octylamine + NAD(+) + H2O = octanal + NH4(+) + NADH + H(+). The enzyme catalyses (R)-sec-butylamine + NAD(+) + H2O = butan-2-one + NH4(+) + NADH + H(+). It catalyses the reaction (S)-sec-butylamine + NAD(+) + H2O = butan-2-one + NH4(+) + NADH + H(+). It carries out the reaction 2-aminopentane + NAD(+) + H2O = pentan-2-one + NH4(+) + NADH + H(+). The catalysed reaction is 3-aminopentane + NAD(+) + H2O = pentan-3-one + NH4(+) + NADH + H(+). The enzyme catalyses (2R)-heptan-2-amine + NAD(+) + H2O = heptan-2-one + NH4(+) + NADH + H(+). It catalyses the reaction (2S)-heptan-2-amine + NAD(+) + H2O = heptan-2-one + NH4(+) + NADH + H(+). It carries out the reaction benzylamine + NAD(+) + H2O = benzaldehyde + NH4(+) + NADH + H(+). The catalysed reaction is 3-aminobutan-2-ol + NAD(+) + H2O = acetoin + NH4(+) + NADH + H(+). The enzyme catalyses 3-aminobutan-1-ol + NAD(+) + H2O = 4-hydroxybutan-2-one + NH4(+) + NADH + H(+). It catalyses the reaction 5-hydroxypentan-2-amine + NAD(+) + H2O = 5-hydroxypentan-2-one + NH4(+) + NADH + H(+). It carries out the reaction 4-hydroxyhexan-3-amine + NAD(+) + H2O = 4-hydroxyhexan-3-one + NH4(+) + NADH + H(+). The catalysed reaction is 5-hydroxyoctan-4-amine + NAD(+) + H2O = 5-hydroxyoctan-4-one + NH4(+) + NADH + H(+). The enzyme catalyses 2-hydroxy-1-phenylethan-1-amine + NAD(+) + H2O = 2-hydroxyacetophenone + NH4(+) + NADH + H(+). It catalyses the reaction hexan-2-amine + NAD(+) + H2O = hexan-2-one + NH4(+) + NADH + H(+). It carries out the reaction 4-phenylbutan-2-amine + NAD(+) + H2O = 4-phenylbutan-2-one + NH4(+) + NADH + H(+). Catalyzes the reversible oxidative deaminations of a broad range of amines, amino alcohols and amino acids. Catalyzes the reversible dehydrogenation of serinol in the presence of NAD(+) to give dihydroxyacetone, ammonium ion and NADH, while NADP(+) shows a slight activity. Is also able to produce 2-amino-1-propanol and aspartate by the reductive amination of the corresponding keto alcohol (hydroxyacetone) and keto acid (oxaloacetate) in the presence of ammonium ions and NADH, and that of acetophenone from phenylethylamine by the oxidative deamination in the presence of NAD(+). The polypeptide is Amine dehydrogenase (Streptomyces virginiae (Streptomyces cinnamonensis)).